A 483-amino-acid polypeptide reads, in one-letter code: Matrix metalloproteinase-20 (483 aa).

Positions 1–22 are cleaved as a signal peptide; that stretch reads MKVLPASGLAVLLVTALKFSAA. A propeptide spans 23–107 (activation peptide); the sequence is APSLFAATPR…PRCGVPDVAN (85 aa). The Cysteine switch motif lies at 98–105; the sequence is PRCGVPDV. Cys-100 is a Zn(2+) binding site. 3 residues coordinate Ca(2+): Glu-164, Ala-165, and Asp-166. The Zn(2+) site is built by His-176 and Asp-178. The Ca(2+) site is built by Asp-183, Gly-184, Arg-186, and Thr-188. His-191 contributes to the Zn(2+) binding site. Glu-197, Gly-198, Gly-200, and Asp-202 together coordinate Ca(2+). His-204 contacts Zn(2+). Residues Asp-206 and Glu-209 each coordinate Ca(2+). A Zn(2+)-binding site is contributed by His-226. Glu-227 is a catalytic residue. The Zn(2+) site is built by His-230 and His-236. Hemopexin repeat units follow at residues 293–343, 344–389, 391–439, and 440–483; these read PDIC…FPQL, MSNV…GFPR, VQRI…FSGV, and NGQI…WIGC. Cys-296 and Cys-483 are oxidised to a cystine.

Belongs to the peptidase M10A family. Zn(2+) serves as cofactor. Requires Ca(2+) as cofactor. Post-translationally, autoactivates at least at the 107-Asn-|-Tyr-108 site. Expressed specifically in the enamel organ.

It localises to the secreted. The protein localises to the extracellular space. Its subcellular location is the extracellular matrix. Degrades amelogenin, the major protein component of the enamel matrix and two of the macromolecules characterizing the cartilage extracellular matrix: aggrecan and the cartilage oligomeric matrix protein (COMP). May play a central role in tooth enamel formation. The chain is Matrix metalloproteinase-20 (MMP20) from Sus scrofa (Pig).